The primary structure comprises 281 residues: 2,3,4,5-tetrahydropyridine-2,6-dicarboxylate N-succinyltransferase (281 aa).

Positions 108 and 145 each coordinate substrate.

It belongs to the transferase hexapeptide repeat family. As to quaternary structure, homotrimer.

Its subcellular location is the cytoplasm. It carries out the reaction (S)-2,3,4,5-tetrahydrodipicolinate + succinyl-CoA + H2O = (S)-2-succinylamino-6-oxoheptanedioate + CoA. The protein operates within amino-acid biosynthesis; L-lysine biosynthesis via DAP pathway; LL-2,6-diaminopimelate from (S)-tetrahydrodipicolinate (succinylase route): step 1/3. In Nitrobacter hamburgensis (strain DSM 10229 / NCIMB 13809 / X14), this protein is 2,3,4,5-tetrahydropyridine-2,6-dicarboxylate N-succinyltransferase.